We begin with the raw amino-acid sequence, 244 residues long: Extracellular superoxide dismutase [Cu-Zn] (244 aa).

Positions 1-15 are cleaved as a signal peptide; sequence MVAFLFCNLLLVACG. 2 disulfides stabilise this stretch: Cys70-Cys215 and Cys132-Cys214. Asn114 carries an N-linked (GlcNAc...) asparagine glycan. Positions 121, 123, and 138 each coordinate Cu cation. Zn(2+)-binding residues include His138, His146, His149, and Asp152. A Cu cation-binding site is contributed by His188. The segment at 224-244 is disordered; that stretch reads AWESQTKERKKRRRESECKTT.

It belongs to the Cu-Zn superoxide dismutase family. Homodimer. Interacts with ATP7A; this interaction is copper-dependent and is required for SOD3 activity. Cu cation is required as a cofactor. It depends on Zn(2+) as a cofactor.

The protein localises to the secreted. Its subcellular location is the extracellular space. It localises to the golgi apparatus. The protein resides in the trans-Golgi network. It carries out the reaction 2 superoxide + 2 H(+) = H2O2 + O2. Its function is as follows. Protect the extracellular space from toxic effect of reactive oxygen intermediates by converting superoxide radicals into hydrogen peroxide and oxygen. This is Extracellular superoxide dismutase [Cu-Zn] (Sod3) from Rattus norvegicus (Rat).